The following is a 100-amino-acid chain: Small ribosomal subunit protein uS14c (100 aa).

It belongs to the universal ribosomal protein uS14 family. As to quaternary structure, part of the 30S ribosomal subunit.

The protein resides in the plastid. It is found in the chloroplast. Binds 16S rRNA, required for the assembly of 30S particles. This chain is Small ribosomal subunit protein uS14c, found in Illicium oligandrum (Star anise).